The primary structure comprises 289 residues: Protease HtpX (289 aa).

2 helical membrane-spanning segments follow: residues 6–26 and 38–58; these read ILFL…LNII and TGIL…SLFM. A Zn(2+)-binding site is contributed by His-144. Glu-145 is an active-site residue. His-148 lines the Zn(2+) pocket. Transmembrane regions (helical) follow at residues 152 to 172 and 194 to 214; these read GDMV…IFLS and LVFW…ATMI. Zn(2+) is bound at residue Glu-223.

Belongs to the peptidase M48B family. Zn(2+) serves as cofactor.

The protein resides in the cell inner membrane. In Haemophilus ducreyi (strain 35000HP / ATCC 700724), this protein is Protease HtpX.